Reading from the N-terminus, the 1978-residue chain is Protein MOR1 (1978 aa).

HEAT repeat units lie at residues 48–86 and 165–202; these read DPRL…AADS and IPPK…WIGK. Residues 230 to 264 are disordered; sequence AGAKPTRKIRSEQDKEPEAEASSDVVGDGPSEEAV. Residues 238-247 are compositionally biased toward basic and acidic residues; sequence IRSEQDKEPE. HEAT repeat units follow at residues 322 to 359, 363 to 400, and 442 to 479; these read GDFS…GLRT, ASSR…AGCL, and KAHK…SVGM. A disordered region spans residues 501-587; sequence IAGSGGGDQA…SVEPPEDVEP (87 aa). Residues 510-527 show a composition bias toward low complexity; that stretch reads AGTSSVTVQSSVGSTATG. The span at 565 to 577 shows a compositional bias: basic and acidic residues; the sequence is GKKDGSVRNEGSK. HEAT repeat units lie at residues 849 to 886, 890 to 928, 932 to 969, and 1008 to 1045; these read DIST…EANK, PTGT…AMGP, KASK…AVHL, and VDAI…VSGQ. A disordered region spans residues 1087–1115; sequence SKGVTKISKSTSNGTLKQGNRSRAVPTKG. The span at 1093-1107 shows a compositional bias: polar residues; sequence ISKSTSNGTLKQGNR. 4 HEAT repeats span residues 1230-1253, 1254-1286, 1287-1325, and 1328-1365; these read LKVL…MTEA, EAAI…QIIQ, AYSV…TCGT, and GGLL…ILGA. Residues 1393 to 1403 are compositionally biased toward basic and acidic residues; that stretch reads MEKRREGKPGE. The interval 1393 to 1431 is disordered; the sequence is MEKRREGKPGEARAALRRSVRDSGPEVAEQSGDISQTVP. The stretch at 1535-1575 is one HEAT 14 repeat; sequence RSCKYVLNTLMQTFQNKKLAHAVKEGTLESLITELLLWLLD. Residues 1837-1862 form a disordered region; the sequence is AAAGRTPSSLPLSTPPPSSLALPSPD.

It belongs to the TOG/XMAP215 family. Expressed in roots, cotyledons, rosette leaves, stems, open flowers and green siliques.

It is found in the cytoplasm. Its subcellular location is the cytoskeleton. It localises to the phragmoplast. The protein localises to the spindle. Functionally, microtubule-binding protein that is essential for cortical microtubules organization and function. Essential for maintaining the interphase cortical array and for correct morphogenesis. Promotes rapid growth and shrinkage of microtubules and suppresses the pausing of interphase microtubules. Regulates the structure and function of microtubule arrays during mitosis and cytokinesis. Probably not required for cellulose microfibrils alignment in roots. The polypeptide is Protein MOR1 (MOR1) (Arabidopsis thaliana (Mouse-ear cress)).